The sequence spans 93 residues: Small ribosomal subunit protein uS19 (93 aa).

Belongs to the universal ribosomal protein uS19 family.

In terms of biological role, protein S19 forms a complex with S13 that binds strongly to the 16S ribosomal RNA. This is Small ribosomal subunit protein uS19 from Tropheryma whipplei (strain TW08/27) (Whipple's bacillus).